Consider the following 250-residue polypeptide: DNA repair protein RecO (250 aa).

It belongs to the RecO family.

Functionally, involved in DNA repair and RecF pathway recombination. The protein is DNA repair protein RecO of Staphylococcus aureus (strain bovine RF122 / ET3-1).